Reading from the N-terminus, the 397-residue chain is Tubby-like protein 8 (397 aa).

Residues 1–16 (MAGSRKVNDLLEENKG) show a composition bias toward basic and acidic residues. The interval 1–46 (MAGSRKVNDLLEENKGNVDTITGSLSTQKGEDKENVSPEKVSTSVE) is disordered. The span at 17–28 (NVDTITGSLSTQ) shows a compositional bias: polar residues.

Belongs to the TUB family. Mostly expressed in roots, flowers and siliques.

The protein is Tubby-like protein 8 of Arabidopsis thaliana (Mouse-ear cress).